The sequence spans 88 residues: M-zodatoxin-Lt1a (88 aa).

The first 22 residues, 1–22 (MKYFVVALALAVALVCIAESTA), serve as a signal peptide directing secretion. Residues 23 to 62 (YDVNEELENELDDLSDAAWLAKAAEDLQALDDFEESEESR) constitute a propeptide that is removed on maturation. The short motif at 59–62 (EESR) is the Processing quadruplet motif element.

Cleavage of the propeptide depends on the processing quadruplet motif (XXXR, with at least one of X being E). In terms of tissue distribution, expressed by the venom gland.

Its subcellular location is the secreted. Has antimicrobial activity against Gram-positive bacteria (A.globiformis VKM Ac-1112 (MIC=0.5 uM), and B.subtilis VKM B-501 (MIC=1.0 uM)), Gram-negative bacteria (E.coli DH5-alpha (MIC=1.0 uM), E.coli MH1 (MIC=0.7 uM), and P.aeruginosa PAO1 (MIC=4.1 uM)), and yeasts (P.pastoris GS115 (MIC=17 uM), and S.cerevisiae Y190 (MIC&gt;33 uM)). Has a moderate hemolytic activity against rabbit erythrocytes. Causes paralysis, but is not lethal when injected into insect (M.domestica) larvae. In Lachesana tarabaevi (Spider), this protein is M-zodatoxin-Lt1a.